The primary structure comprises 368 residues: Queuine tRNA-ribosyltransferase (368 aa).

The active-site Proton acceptor is Asp89. Substrate is bound by residues 89 to 93 (DSGGF), Asp143, Gln187, and Gly214. Asp264 serves as the catalytic Nucleophile. Positions 269 to 273 (TRNAR) are RNA binding; important for wobble base 34 recognition. Zn(2+) is bound by residues Cys302, Cys304, Cys307, and His333.

The protein belongs to the queuine tRNA-ribosyltransferase family. In terms of assembly, homodimer. Within each dimer, one monomer is responsible for RNA recognition and catalysis, while the other monomer binds to the replacement base PreQ1. Zn(2+) is required as a cofactor.

It catalyses the reaction 7-aminomethyl-7-carbaguanine + guanosine(34) in tRNA = 7-aminomethyl-7-carbaguanosine(34) in tRNA + guanine. The protein operates within tRNA modification; tRNA-queuosine biosynthesis. Functionally, catalyzes the base-exchange of a guanine (G) residue with the queuine precursor 7-aminomethyl-7-deazaguanine (PreQ1) at position 34 (anticodon wobble position) in tRNAs with GU(N) anticodons (tRNA-Asp, -Asn, -His and -Tyr). Catalysis occurs through a double-displacement mechanism. The nucleophile active site attacks the C1' of nucleotide 34 to detach the guanine base from the RNA, forming a covalent enzyme-RNA intermediate. The proton acceptor active site deprotonates the incoming PreQ1, allowing a nucleophilic attack on the C1' of the ribose to form the product. After dissociation, two additional enzymatic reactions on the tRNA convert PreQ1 to queuine (Q), resulting in the hypermodified nucleoside queuosine (7-(((4,5-cis-dihydroxy-2-cyclopenten-1-yl)amino)methyl)-7-deazaguanosine). This Blochmanniella pennsylvanica (strain BPEN) protein is Queuine tRNA-ribosyltransferase.